Consider the following 268-residue polypeptide: Tryptophan synthase alpha chain (268 aa).

Catalysis depends on proton acceptor residues E49 and D60.

The protein belongs to the TrpA family. In terms of assembly, tetramer of two alpha and two beta chains.

The catalysed reaction is (1S,2R)-1-C-(indol-3-yl)glycerol 3-phosphate + L-serine = D-glyceraldehyde 3-phosphate + L-tryptophan + H2O. It functions in the pathway amino-acid biosynthesis; L-tryptophan biosynthesis; L-tryptophan from chorismate: step 5/5. Its function is as follows. The alpha subunit is responsible for the aldol cleavage of indoleglycerol phosphate to indole and glyceraldehyde 3-phosphate. This chain is Tryptophan synthase alpha chain, found in Escherichia coli (strain 55989 / EAEC).